The chain runs to 472 residues: Glutamate--tRNA ligase 2 (472 aa).

The 'HIGH' region signature appears at Pro12–Asn22. A 'KMSKS' region motif is present at residues Pro253 to Arg257. An ATP-binding site is contributed by Lys256.

It belongs to the class-I aminoacyl-tRNA synthetase family. Glutamate--tRNA ligase type 1 subfamily. As to quaternary structure, monomer.

Its subcellular location is the cytoplasm. It carries out the reaction tRNA(Glu) + L-glutamate + ATP = L-glutamyl-tRNA(Glu) + AMP + diphosphate. In terms of biological role, catalyzes the attachment of glutamate to tRNA(Glu) in a two-step reaction: glutamate is first activated by ATP to form Glu-AMP and then transferred to the acceptor end of tRNA(Glu). In Nitrosococcus oceani (strain ATCC 19707 / BCRC 17464 / JCM 30415 / NCIMB 11848 / C-107), this protein is Glutamate--tRNA ligase 2.